The primary structure comprises 867 residues: MIKSTNEIRQGFRDFFVNKGHQSVSTGSLVPHDDPTLLFTNAGMNQFKDTYLGTEKRAYTRATSSQCCVRAGGKHNDLDNVGYTARHHTFFEMLGNFSFGDYFKREAIGFAWEYLTVELGLPKDKLWVTVFDEDLEAEKIWIEEIGVDPKCVLRIGAKDNFWSMGDTGPCGPCSEIFYDHGEDVWGGPPGTAEEDGDRFIEIWNIVFMQYNRHADGTMENLPKPSVDTGMGLERISAIMQNCHSNYEIDLFQGLIKKVAEVTGASDLEDKSLRVVADHIRSCGFLICDGVMPSNEGRGYVLRRIIRRAVRHGHKLGAKDIFFFKIYDELINQMGDAYPELSKQRLFVEKILRREEEQFAKTLDRGLQILDNELDHLEGQVIPGDVVFKLYDTFGFPADLTADIARERGLTIDEAGFDKAMAEQRKRAQQANNFGIDYNKTLIIDQKTEFIGYETLQGAATVTHLVVEGAFVNALKEGDSGQVILSATPFYAEAGGQSGDAGKLILNNGVFVVTDTKKSGDAFVHSGYVGMGSVKVNDKVHAEVDTARRQSIALHHSATHLLHAALRKTLGEHVTQKGSLVDADKLRFDFSHFEALSADSLSEVTFLVNEAIRNNYEVVTKLMDIEEAKSSNAMALFGEKYDEMVRVVQMGDFSTELCGGTHAKRTGDLGLFLIRSESGIAAGVRRIEATVGSAADQVISELLYEVDKACGLVRGDHVNLGEKIEQLVDRSKLLEKEVAELKAKIASAAGANLIDNAIEINGVKVVIANIEGIDPKLLRDSVDQMKNKMQSGIVVLATVAADDKVSLIAGVSKDLIKKVKAGELVNLVAGPVGGKGGGRPDMAMAGGNNPAALADALALVAPWLSERL.

Zn(2+) contacts are provided by H555, H559, C657, and H661.

It belongs to the class-II aminoacyl-tRNA synthetase family. The cofactor is Zn(2+).

It localises to the cytoplasm. The enzyme catalyses tRNA(Ala) + L-alanine + ATP = L-alanyl-tRNA(Ala) + AMP + diphosphate. In terms of biological role, catalyzes the attachment of alanine to tRNA(Ala) in a two-step reaction: alanine is first activated by ATP to form Ala-AMP and then transferred to the acceptor end of tRNA(Ala). Also edits incorrectly charged Ser-tRNA(Ala) and Gly-tRNA(Ala) via its editing domain. The sequence is that of Alanine--tRNA ligase from Psychromonas ingrahamii (strain DSM 17664 / CCUG 51855 / 37).